The following is a 320-amino-acid chain: Malate dehydrogenase (320 aa).

NAD(+) contacts are provided by residues 10 to 15 (GSGMIG) and D34. Residues R83 and R89 each coordinate substrate. Residues N96 and 119–121 (ITN) each bind NAD(+). Substrate-binding residues include N121 and R152. The Proton acceptor role is filled by H176.

The protein belongs to the LDH/MDH superfamily. MDH type 3 family.

The catalysed reaction is (S)-malate + NAD(+) = oxaloacetate + NADH + H(+). Catalyzes the reversible oxidation of malate to oxaloacetate. The chain is Malate dehydrogenase from Rhizobium meliloti (strain 1021) (Ensifer meliloti).